The sequence spans 407 residues: 8-amino-7-oxononanoate synthase (407 aa).

Arg24 lines the substrate pocket. Pyridoxal 5'-phosphate is bound at residue 111–112 (GF). His137 contacts substrate. The pyridoxal 5'-phosphate site is built by Ser183, His211, and Thr239. Lys242 is modified (N6-(pyridoxal phosphate)lysine). Position 356 (Thr356) interacts with substrate.

This sequence belongs to the class-II pyridoxal-phosphate-dependent aminotransferase family. BioF subfamily. As to quaternary structure, homodimer. Pyridoxal 5'-phosphate is required as a cofactor.

It carries out the reaction 6-carboxyhexanoyl-[ACP] + L-alanine + H(+) = (8S)-8-amino-7-oxononanoate + holo-[ACP] + CO2. Its pathway is cofactor biosynthesis; biotin biosynthesis. In terms of biological role, catalyzes the decarboxylative condensation of pimeloyl-[acyl-carrier protein] and L-alanine to produce 8-amino-7-oxononanoate (AON), [acyl-carrier protein], and carbon dioxide. This chain is 8-amino-7-oxononanoate synthase, found in Stenotrophomonas maltophilia (strain R551-3).